A 622-amino-acid chain; its full sequence is MALRGTLRPLKVRRRREMLPQQVGFVCAVLALVCCASGLFGSLGHKTASASKRVLPDTWRNRKLMAPVNGTQTAKNCTDPAIHEFPTDLFSNKERQHGAVLLHILGALYMFYALAIVCDDFFVPSLEKICERLHLSEDVAGATFMAAGSSTPELFASVIGVFITHGDVGVGTIVGSAVFNILCIIGVCGLFAGQVVRLTWWAVCRDSVYYTISVIVLIVFIYDEQIVWWEGLVLIILYVFYILIMKYNVKMQAFFTVKQKSIANGNPVNSELEAGNDFYDGSYDDPSVPLLGQVKEKPQYGKNPVVMVDEIMSSSPPKFTFPEAGLRIMITNKFGPRTRLRMASRIIINERQRLINSANGVSSKPLQNGRHENIENGNVPVENPEDPQQNQEQQPPPQPPPPEPEPVEADFLSPFSVPEARGDKVKWVFTWPLIFLLCVTIPNCSKPRWEKFFMVTFITATLWIAVFSYIMVWLVTIIGYTLGIPDVIMGITFLAAGTSVPDCMASLIVARQGLGDMAVSNTIGSNVFDILVGLGVPWGLQTMVVNYGSTVKINSRGLVYSVVLLLGSVALTVLGIHLNKWRLDRKLGVYVLVLYAIFLCFSIMIEFNVFTFVNLPMCREDD.

The signal sequence occupies residues 1–38; that stretch reads MALRGTLRPLKVRRRREMLPQQVGFVCAVLALVCCASG. The Extracellular segment spans residues 39-97; that stretch reads LFGSLGHKTASASKRVLPDTWRNRKLMAPVNGTQTAKNCTDPAIHEFPTDLFSNKERQH. N69 and N76 each carry an N-linked (GlcNAc...) asparagine glycan. Residues 98 to 118 form a helical membrane-spanning segment; sequence GAVLLHILGALYMFYALAIVC. The Cytoplasmic portion of the chain corresponds to 119–142; the sequence is DDFFVPSLEKICERLHLSEDVAGA. Residues 139–179 form an Alpha-1 repeat; the sequence is VAGATFMAAGSSTPELFASVIGVFITHGDVGVGTIVGSAVF. The helical transmembrane segment at 143-163 threads the bilayer; sequence TFMAAGSSTPELFASVIGVFI. Over 164–172 the chain is Extracellular; that stretch reads THGDVGVGT. A helical transmembrane segment spans residues 173–193; that stretch reads IVGSAVFNILCIIGVCGLFAG. Topologically, residues 194 to 200 are cytoplasmic; the sequence is QVVRLTW. The helical transmembrane segment at 201–221 threads the bilayer; that stretch reads WAVCRDSVYYTISVIVLIVFI. The Extracellular segment spans residues 222–224; sequence YDE. The helical transmembrane segment at 225 to 245 threads the bilayer; it reads QIVWWEGLVLIILYVFYILIM. The Cytoplasmic portion of the chain corresponds to 246-457; that stretch reads KYNVKMQAFF…RWEKFFMVTF (212 aa). The disordered stretch occupies residues 358–410; sequence ANGVSSKPLQNGRHENIENGNVPVENPEDPQQNQEQQPPPQPPPPEPEPVEAD. Positions 380-393 are enriched in low complexity; it reads PVENPEDPQQNQEQ. Residues 394 to 404 are compositionally biased toward pro residues; the sequence is QPPPQPPPPEP. A helical membrane pass occupies residues 458–478; that stretch reads ITATLWIAVFSYIMVWLVTII. Position 479 (G479) is a topological domain, extracellular. Residues 480–500 traverse the membrane as a helical segment; the sequence is YTLGIPDVIMGITFLAAGTSV. Residues 495 to 526 form an Alpha-2 repeat; the sequence is AAGTSVPDCMASLIVARQGLGDMAVSNTIGSN. The Cytoplasmic portion of the chain corresponds to 501-526; that stretch reads PDCMASLIVARQGLGDMAVSNTIGSN. A helical transmembrane segment spans residues 527 to 547; sequence VFDILVGLGVPWGLQTMVVNY. At 548–557 the chain is on the extracellular side; sequence GSTVKINSRG. Residues 558–578 form a helical membrane-spanning segment; that stretch reads LVYSVVLLLGSVALTVLGIHL. At 579–586 the chain is on the cytoplasmic side; the sequence is NKWRLDRK. The chain crosses the membrane as a helical span at residues 587–607; that stretch reads LGVYVLVLYAIFLCFSIMIEF. Topologically, residues 608–622 are extracellular; that stretch reads NVFTFVNLPMCREDD.

It belongs to the Ca(2+):cation antiporter (CaCA) (TC 2.A.19) family. SLC24A subfamily. Expressed abundantly in all regions of the brain, aorta, lung and thymus. Expressed at lower levels in the stomach and intestine.

The protein resides in the cell membrane. It localises to the cytoplasm. It carries out the reaction Ca(2+)(out) + K(+)(out) + 4 Na(+)(in) = Ca(2+)(in) + K(+)(in) + 4 Na(+)(out). In terms of biological role, calcium, potassium:sodium antiporter that transports 1 Ca(2+) and 1 K(+) in exchange for 4 Na(+). Controls the rapid response termination and proper regulation of adaptation in olfactory sensory neurons (OSNs) which subsequently influences how odor information is encoded and perceived. May play a role in calcium transport during amelogenesis. The chain is Sodium/potassium/calcium exchanger 4 from Homo sapiens (Human).